Reading from the N-terminus, the 1400-residue chain is DNA-directed RNA polymerase subunit beta (1400 aa).

Belongs to the RNA polymerase beta chain family. In terms of assembly, the RNAP catalytic core consists of 2 alpha, 1 beta, 1 beta' and 1 omega subunit. When a sigma factor is associated with the core the holoenzyme is formed, which can initiate transcription.

It catalyses the reaction RNA(n) + a ribonucleoside 5'-triphosphate = RNA(n+1) + diphosphate. DNA-dependent RNA polymerase catalyzes the transcription of DNA into RNA using the four ribonucleoside triphosphates as substrates. This chain is DNA-directed RNA polymerase subunit beta, found in Acidiphilium cryptum (strain JF-5).